Here is a 134-residue protein sequence, read N- to C-terminus: Cytochrome b (134 aa).

3 consecutive transmembrane segments (helical) span residues 33–53 (FGSLLGVCLGVQILTGLFLAM), 77–98 (WLLRYLHANGASMFFICLYLHV), and 113–133 (WNIGILLLFAVMATDFMGYVL). Residues His-83 and His-97 each coordinate heme b.

Belongs to the cytochrome b family. The cytochrome bc1 complex contains 11 subunits: 3 respiratory subunits (MT-CYB, CYC1 and UQCRFS1), 2 core proteins (UQCRC1 and UQCRC2) and 6 low-molecular weight proteins (UQCRH/QCR6, UQCRB/QCR7, UQCRQ/QCR8, UQCR10/QCR9, UQCR11/QCR10 and a cleavage product of UQCRFS1). This cytochrome bc1 complex then forms a dimer. Requires heme b as cofactor.

Its subcellular location is the mitochondrion inner membrane. Functionally, component of the ubiquinol-cytochrome c reductase complex (complex III or cytochrome b-c1 complex) that is part of the mitochondrial respiratory chain. The b-c1 complex mediates electron transfer from ubiquinol to cytochrome c. Contributes to the generation of a proton gradient across the mitochondrial membrane that is then used for ATP synthesis. The sequence is that of Cytochrome b (MT-CYB) from Sturnira tildae (Tilda's yellow-shouldered bat).